We begin with the raw amino-acid sequence, 625 residues long: tRNA-guanine(15) transglycosylase (625 aa).

The Nucleophile role is filled by D86. 2 residues coordinate substrate: D121 and G184. Residues 546–621 (GLRVVVDDES…VAVKVHEGVN (76 aa)) enclose the PUA domain.

It belongs to the archaeosine tRNA-ribosyltransferase family. The cofactor is Zn(2+).

The enzyme catalyses guanosine(15) in tRNA + 7-cyano-7-deazaguanine = 7-cyano-7-carbaguanosine(15) in tRNA + guanine. It functions in the pathway tRNA modification; archaeosine-tRNA biosynthesis. Functionally, exchanges the guanine residue with 7-cyano-7-deazaguanine (preQ0) at position 15 in the dihydrouridine loop (D-loop) of archaeal tRNAs. This Picrophilus torridus (strain ATCC 700027 / DSM 9790 / JCM 10055 / NBRC 100828 / KAW 2/3) protein is tRNA-guanine(15) transglycosylase.